A 142-amino-acid chain; its full sequence is Universal stress protein G (142 aa).

The protein belongs to the universal stress protein A family.

The sequence is that of Universal stress protein G (uspG) from Salmonella typhi.